The sequence spans 339 residues: UDP-N-acetylglucosamine--N-acetylmuramyl-(pentapeptide) pyrophosphoryl-undecaprenol N-acetylglucosamine transferase (339 aa).

UDP-N-acetyl-alpha-D-glucosamine-binding positions include 10 to 12 (TGG), asparagine 124, arginine 168, serine 188, isoleucine 235, and glutamine 280.

The protein belongs to the glycosyltransferase 28 family. MurG subfamily.

The protein resides in the cell inner membrane. The enzyme catalyses di-trans,octa-cis-undecaprenyl diphospho-N-acetyl-alpha-D-muramoyl-L-alanyl-D-glutamyl-meso-2,6-diaminopimeloyl-D-alanyl-D-alanine + UDP-N-acetyl-alpha-D-glucosamine = di-trans,octa-cis-undecaprenyl diphospho-[N-acetyl-alpha-D-glucosaminyl-(1-&gt;4)]-N-acetyl-alpha-D-muramoyl-L-alanyl-D-glutamyl-meso-2,6-diaminopimeloyl-D-alanyl-D-alanine + UDP + H(+). Its pathway is cell wall biogenesis; peptidoglycan biosynthesis. In terms of biological role, cell wall formation. Catalyzes the transfer of a GlcNAc subunit on undecaprenyl-pyrophosphoryl-MurNAc-pentapeptide (lipid intermediate I) to form undecaprenyl-pyrophosphoryl-MurNAc-(pentapeptide)GlcNAc (lipid intermediate II). This is UDP-N-acetylglucosamine--N-acetylmuramyl-(pentapeptide) pyrophosphoryl-undecaprenol N-acetylglucosamine transferase from Pseudothermotoga lettingae (strain ATCC BAA-301 / DSM 14385 / NBRC 107922 / TMO) (Thermotoga lettingae).